The following is a 95-amino-acid chain: Aspartyl/glutamyl-tRNA(Asn/Gln) amidotransferase subunit C (95 aa).

The protein belongs to the GatC family. As to quaternary structure, heterotrimer of A, B and C subunits.

The catalysed reaction is L-glutamyl-tRNA(Gln) + L-glutamine + ATP + H2O = L-glutaminyl-tRNA(Gln) + L-glutamate + ADP + phosphate + H(+). The enzyme catalyses L-aspartyl-tRNA(Asn) + L-glutamine + ATP + H2O = L-asparaginyl-tRNA(Asn) + L-glutamate + ADP + phosphate + 2 H(+). Allows the formation of correctly charged Asn-tRNA(Asn) or Gln-tRNA(Gln) through the transamidation of misacylated Asp-tRNA(Asn) or Glu-tRNA(Gln) in organisms which lack either or both of asparaginyl-tRNA or glutaminyl-tRNA synthetases. The reaction takes place in the presence of glutamine and ATP through an activated phospho-Asp-tRNA(Asn) or phospho-Glu-tRNA(Gln). The protein is Aspartyl/glutamyl-tRNA(Asn/Gln) amidotransferase subunit C of Alcanivorax borkumensis (strain ATCC 700651 / DSM 11573 / NCIMB 13689 / SK2).